The sequence spans 93 residues: Co-chaperonin GroES 2 (93 aa).

Residues 1–20 are disordered; the sequence is MQPLGERIVVQREESETTTA.

Belongs to the GroES chaperonin family. Heptamer of 7 subunits arranged in a ring. Interacts with the chaperonin GroEL.

The protein resides in the cytoplasm. In terms of biological role, together with the chaperonin GroEL, plays an essential role in assisting protein folding. The GroEL-GroES system forms a nano-cage that allows encapsulation of the non-native substrate proteins and provides a physical environment optimized to promote and accelerate protein folding. GroES binds to the apical surface of the GroEL ring, thereby capping the opening of the GroEL channel. This chain is Co-chaperonin GroES 2, found in Rhodopirellula baltica (strain DSM 10527 / NCIMB 13988 / SH1).